We begin with the raw amino-acid sequence, 328 residues long: D-cysteine desulfhydrase (328 aa).

Lys51 carries the post-translational modification N6-(pyridoxal phosphate)lysine.

This sequence belongs to the ACC deaminase/D-cysteine desulfhydrase family. Homodimer. Pyridoxal 5'-phosphate serves as cofactor.

The enzyme catalyses D-cysteine + H2O = hydrogen sulfide + pyruvate + NH4(+) + H(+). Functionally, catalyzes the alpha,beta-elimination reaction of D-cysteine and of several D-cysteine derivatives. It could be a defense mechanism against D-cysteine. In Salmonella paratyphi A (strain AKU_12601), this protein is D-cysteine desulfhydrase.